The chain runs to 534 residues: GMP synthase [glutamine-hydrolyzing] (534 aa).

Residues 4–202 (KILILDFGSQ…VLEIAKAQPD (199 aa)) enclose the Glutamine amidotransferase type-1 domain. The active-site Nucleophile is the Cys81. Active-site residues include His176 and Glu178. A GMPS ATP-PPase domain is found at 203–402 (WVMKDHVAEA…LGLPHDMVYR (200 aa)). ATP is bound at residue 230–236 (SGGVDSS).

As to quaternary structure, homodimer.

It catalyses the reaction XMP + L-glutamine + ATP + H2O = GMP + L-glutamate + AMP + diphosphate + 2 H(+). Its pathway is purine metabolism; GMP biosynthesis; GMP from XMP (L-Gln route): step 1/1. Its function is as follows. Catalyzes the synthesis of GMP from XMP. This Methylibium petroleiphilum (strain ATCC BAA-1232 / LMG 22953 / PM1) protein is GMP synthase [glutamine-hydrolyzing].